The chain runs to 227 residues: NAD(P)H-quinone oxidoreductase subunit K, chloroplastic (227 aa).

[4Fe-4S] cluster contacts are provided by cysteine 43, cysteine 44, cysteine 108, and cysteine 139.

This sequence belongs to the complex I 20 kDa subunit family. NDH is composed of at least 16 different subunits, 5 of which are encoded in the nucleus. The cofactor is [4Fe-4S] cluster.

It localises to the plastid. The protein resides in the chloroplast thylakoid membrane. The catalysed reaction is a plastoquinone + NADH + (n+1) H(+)(in) = a plastoquinol + NAD(+) + n H(+)(out). The enzyme catalyses a plastoquinone + NADPH + (n+1) H(+)(in) = a plastoquinol + NADP(+) + n H(+)(out). NDH shuttles electrons from NAD(P)H:plastoquinone, via FMN and iron-sulfur (Fe-S) centers, to quinones in the photosynthetic chain and possibly in a chloroplast respiratory chain. The immediate electron acceptor for the enzyme in this species is believed to be plastoquinone. Couples the redox reaction to proton translocation, and thus conserves the redox energy in a proton gradient. This chain is NAD(P)H-quinone oxidoreductase subunit K, chloroplastic, found in Ranunculus macranthus (Large buttercup).